Consider the following 123-residue polypeptide: MPTIQQLIRNSRQPAENRTKSPALRACPQRRGVCTRVYTTTPKKPNSALRKVARVRLTSGFEVTAYIPGIGHNLQEHSVILVRGGRVKDLPGVRYHIVRGTLDAVGVKDRRQGRSKYGVKRPK.

The span at Met1–Glu16 shows a compositional bias: polar residues. Residues Met1–Ala23 form a disordered region.

The protein belongs to the universal ribosomal protein uS12 family. As to quaternary structure, part of the 30S ribosomal subunit.

It is found in the plastid. The protein resides in the chloroplast. With S4 and S5 plays an important role in translational accuracy. Located at the interface of the 30S and 50S subunits. This is Small ribosomal subunit protein uS12c (rps12) from Staurastrum punctulatum (Green alga).